A 363-amino-acid polypeptide reads, in one-letter code: MAP kinase kinase skh1/pek1 (363 aa).

Positions 79–343 constitute a Protein kinase domain; that stretch reads ILYMNSLGEG…PQKMLTHPWV (265 aa). ATP-binding positions include 85–93 and Lys108; that span reads LGEGVSGSV. Residue Asp206 is the Proton acceptor of the active site. Residue Ser234 is modified to Phosphoserine. At Thr238 the chain carries Phosphothreonine.

Belongs to the protein kinase superfamily. STE Ser/Thr protein kinase family. MAP kinase kinase subfamily.

It carries out the reaction L-seryl-[protein] + ATP = O-phospho-L-seryl-[protein] + ADP + H(+). It catalyses the reaction L-threonyl-[protein] + ATP = O-phospho-L-threonyl-[protein] + ADP + H(+). The catalysed reaction is L-tyrosyl-[protein] + ATP = O-phospho-L-tyrosyl-[protein] + ADP + H(+). Activated by mkh1. Its function is as follows. Involved in the mkh1 signal transduction pathway that plays a role in cell wall integrity. Activates spm1/pmk1 via phosphorylation. The chain is MAP kinase kinase skh1/pek1 (skh1) from Schizosaccharomyces pombe (strain 972 / ATCC 24843) (Fission yeast).